The chain runs to 602 residues: Elongation factor 4 (602 aa).

Residues 2–184 (KHIRNFSIIA…AIVAKVPAPR (183 aa)) enclose the tr-type G domain. GTP-binding positions include 14-19 (DHGKST) and 131-134 (NKMD).

The protein belongs to the TRAFAC class translation factor GTPase superfamily. Classic translation factor GTPase family. LepA subfamily.

It localises to the cell inner membrane. It carries out the reaction GTP + H2O = GDP + phosphate + H(+). Functionally, required for accurate and efficient protein synthesis under certain stress conditions. May act as a fidelity factor of the translation reaction, by catalyzing a one-codon backward translocation of tRNAs on improperly translocated ribosomes. Back-translocation proceeds from a post-translocation (POST) complex to a pre-translocation (PRE) complex, thus giving elongation factor G a second chance to translocate the tRNAs correctly. Binds to ribosomes in a GTP-dependent manner. The chain is Elongation factor 4 from Verminephrobacter eiseniae (strain EF01-2).